The following is a 76-amino-acid chain: Putative antitoxin VapB2 (76 aa).

This sequence belongs to the UPF0330 family.

Possibly the antitoxin component of a type II toxin-antitoxin (TA) system. Its cognate toxin is VapC2 (Potential). The polypeptide is Putative antitoxin VapB2 (vapB2) (Pyrococcus abyssi (strain GE5 / Orsay)).